We begin with the raw amino-acid sequence, 360 residues long: MGPRALLLLLSGVLILTETRAGSHSLRYFSTAVSRPGLGEPRYLEVGYVDDTQFVQFDSDAPNPRMEPRARWVEQEGPEYWDRNTRNAKGNAQSFRVNLNTLRGYYNQSEAGSHTLQWMSGCDVGPDGALRRGFMQYGYDGRDYLALNEDLRSWTAGETEAQITKRKWEAAGYAEVQRNYLEGECVEWLRRYLENGKDTLLRADPPKAHVTHHPISGREVTLRCWALGFYPEEISLTWQHDGEDQTQDMELVETRPSGDGTFQKWAALVVPSGDEQRYTCRVQHEGLQEPLTLRWEPPQPSFLTMGIIVGLVLLVVTGAVVAGVVICMKKRSGEKGGNYIQASSSDSAQGSDVSLTVPKV.

The signal sequence occupies residues 1-21 (MGPRALLLLLSGVLILTETRA). The alpha-1 stretch occupies residues 22–111 (GSHSLRYFST…LRGYYNQSEA (90 aa)). Topologically, residues 22–308 (GSHSLRYFST…QPSFLTMGII (287 aa)) are extracellular. N-linked (GlcNAc...) asparagine glycosylation occurs at Asn-107. The tract at residues 112–203 (GSHTLQWMSG…ENGKDTLLRA (92 aa)) is alpha-2. Cystine bridges form between Cys-122–Cys-185 and Cys-224–Cys-280. The interval 204-295 (DPPKAHVTHH…GLQEPLTLRW (92 aa)) is alpha-3. The 87-residue stretch at 206-292 (PKAHVTHHPI…QHEGLQEPLT (87 aa)) folds into the Ig-like C1-type domain. The segment at 296–308 (EPPQPSFLTMGII) is connecting peptide. Residues 309–328 (VGLVLLVVTGAVVAGVVICM) form a helical membrane-spanning segment. Residues 329-360 (KKRSGEKGGNYIQASSSDSAQGSDVSLTVPKV) are Cytoplasmic-facing. The interval 340 to 360 (IQASSSDSAQGSDVSLTVPKV) is disordered. Low complexity predominate over residues 341-354 (QASSSDSAQGSDVS). 2 positions are modified to phosphoserine: Ser-351 and Ser-354.

It belongs to the MHC class I family. As to quaternary structure, heterodimer of an alpha chain and a beta chain (beta-2-microglobulin).

It is found in the membrane. In terms of biological role, involved in the presentation of foreign antigens to the immune system. The chain is BOLA class I histocompatibility antigen, alpha chain BL3-6 from Bos taurus (Bovine).